The chain runs to 529 residues: Transcription factor BIM1 (529 aa).

Disordered regions lie at residues methionine 1 to proline 91, lysine 245 to lysine 291, arginine 425 to leucine 450, and alanine 491 to glutamine 529. The segment covering lysine 76–leucine 86 has biased composition (pro residues). Composition is skewed to basic and acidic residues over residues histidine 255–valine 265 and serine 282–lysine 291. The 51-residue stretch at threonine 276 to leucine 326 folds into the bHLH domain. The segment covering valine 426 to serine 438 has biased composition (low complexity). Positions phenylalanine 499–lysine 517 are enriched in basic and acidic residues. Positions glutamine 518 to glutamine 529 are enriched in basic residues.

Homodimer. Interacts with BZR2/BES1 through both C-terminal and bHLH domains. Also interacts with LHW. As to expression, expressed constitutively in roots.

The protein localises to the nucleus. In terms of biological role, positive brassinosteroid-signaling protein. Transcription factor that bind specifically to the DNA sequence 5'-CANNTG-3'(E box). Can bind individually to the promoter as a homodimer or synergistically as a heterodimer with BZR2/BES1. Does not itself activate transcription but enhances BZR2/BES1-mediated target gene activation. The sequence is that of Transcription factor BIM1 (BIM1) from Arabidopsis thaliana (Mouse-ear cress).